We begin with the raw amino-acid sequence, 483 residues long: Regulatory protein ViaA (483 aa).

It belongs to the ViaA family. Homodimer. Interacts with RavA.

It localises to the cytoplasm. Functionally, component of the RavA-ViaA chaperone complex, which may act on the membrane to optimize the function of some of the respiratory chains. ViaA stimulates the ATPase activity of RavA. This Shigella sonnei (strain Ss046) protein is Regulatory protein ViaA.